A 780-amino-acid polypeptide reads, in one-letter code: Lethal(3)malignant brain tumor-like protein 3 (780 aa).

Residues 1-64 are interaction with RBPJ. Required for transcription repressor activity on Notch target genes; sequence MTESASSTSG…VKKATATTTW (64 aa). Residues 149–220 are disordered; it reads DKDQKEERDV…RKRRGDSAVL (72 aa). Acidic residues-rich tracts occupy residues 157 to 166 and 185 to 194; these read DVEEDNEEED and EDGEERDDEM. 3 MBT repeats span residues 232–332, 340–439, and 448–543; these read WCWA…LHPP, FNWQ…LITP, and FSWD…LQPP. Residues 549–593 form a CCHHC-type; degenerate zinc finger; sequence LMEASEHGGCSTPGCKGIGHFKRARHLGPHSAANCPYSEINLNKD. The disordered stretch occupies residues 597-665; the sequence is PDRLSGEMPP…GAREEPTVQQ (69 aa). Residues 600–710 form an interaction with DCAF5 region; sequence LSGEMPPASP…PASKVSKWST (111 aa). The residue at position 608 (Ser608) is a Phosphoserine. Lys637 is covalently cross-linked (Glycyl lysine isopeptide (Lys-Gly) (interchain with G-Cter in SUMO2)). The segment covering 643–661 has biased composition (basic and acidic residues); that stretch reads RTESEMRTSHEARGAREEP. Lys704 participates in a covalent cross-link: Glycyl lysine isopeptide (Lys-Gly) (interchain with G-Cter in SUMO2). The SAM domain maps to 708–772; that stretch reads WSTDEVSEFI…FNSILMFKAA (65 aa).

As to quaternary structure, interacts with RNF2. Interacts (via SAM domain) with SAMD1 (via SAM domain); the interaction mediates L3MBTL3 binding to chromatin. Interacts with RBPJ; the interaction is required for L3MBTL3 localization to chromatin and is impaired by Notch-derived peptides containing the intracellular domain (NICD). Interacts (via SAM domain) with KDM1A. Interacts with DCAF5. Interacts with DNMT1. Interacts with E2F1. Interacts with SOX2. Interacts with SFMBT1.

The protein resides in the nucleus. In terms of biological role, is a negative regulator of Notch target genes expression, required for RBPJ-mediated transcriptional repression. It recruits KDM1A to Notch-responsive elements and promotes KDM1A-mediated H3K4me demethylation. Involved in the regulation of ubiquitin-dependent degradation of a set of methylated non-histone proteins, including SOX2, DNMT1 and E2F1. It acts as an adapter recruiting the CRL4-DCAF5 E3 ubiquitin ligase complex to methylated target proteins. Required for normal maturation of myeloid progenitor cells. The polypeptide is Lethal(3)malignant brain tumor-like protein 3 (Homo sapiens (Human)).